The following is a 488-amino-acid chain: UDP-N-acetylmuramate--L-alanine ligase (488 aa).

127-133 (GTHGKTT) contacts ATP.

The protein belongs to the MurCDEF family.

It localises to the cytoplasm. It catalyses the reaction UDP-N-acetyl-alpha-D-muramate + L-alanine + ATP = UDP-N-acetyl-alpha-D-muramoyl-L-alanine + ADP + phosphate + H(+). It participates in cell wall biogenesis; peptidoglycan biosynthesis. Functionally, cell wall formation. This is UDP-N-acetylmuramate--L-alanine ligase from Shewanella sp. (strain MR-4).